The chain runs to 758 residues: Calcium up-regulated protein E (758 aa).

Positions 1–22 are disordered; the sequence is MINIEDISKSSNQSEEKQLKST. Ricin B-type lectin domains follow at residues 25 to 145 and 156 to 288; these read KPKY…WTTF and GYFQ…WIAN.

It belongs to the cup family.

The protein localises to the cytoplasm. It is found in the membrane. Its function is as follows. May play an important role in stabilizing and/or regulating the cell membrane during Ca(2+) stress or certain stages of development. This chain is Calcium up-regulated protein E (cupE), found in Dictyostelium discoideum (Social amoeba).